An 838-amino-acid chain; its full sequence is Glycogen phosphorylase, brain form (838 aa).

Ala-2 carries the post-translational modification N-acetylalanine. A Phosphoserine modification is found at Ser-15. The AMP site is built by Asp-43, Tyr-197, and Arg-310. Tyr-197 is subject to Phosphotyrosine. A Phosphotyrosine modification is found at Tyr-473. Ser-524 carries the phosphoserine modification. Pyridoxal 5'-phosphate is bound at residue Lys-569. The tract at residues 677–678 is pyridoxal 5'-phosphate; sequence TG. Lys-681 carries the post-translational modification N6-(pyridoxal phosphate)lysine.

Belongs to the glycogen phosphorylase family. Homodimer. Dimers associate into a tetramer to form the enzymatically active phosphorylase A. Pyridoxal 5'-phosphate serves as cofactor. In terms of processing, phosphorylation of Ser-15 converts phosphorylase B (unphosphorylated) to phosphorylase A.

It carries out the reaction [(1-&gt;4)-alpha-D-glucosyl](n) + phosphate = [(1-&gt;4)-alpha-D-glucosyl](n-1) + alpha-D-glucose 1-phosphate. Activity of phosphorylase is controlled both by allosteric means (through the non-covalent binding of metabolites) and by covalent modification. Thus AMP allosterically activates, whereas ATP, ADP, and glucose-6-phosphate allosterically inhibit, phosphorylase B. Its function is as follows. Glycogen phosphorylase that regulates glycogen mobilization. Phosphorylase is an important allosteric enzyme in carbohydrate metabolism. Enzymes from different sources differ in their regulatory mechanisms and in their natural substrates. However, all known phosphorylases share catalytic and structural properties. In Rattus norvegicus (Rat), this protein is Glycogen phosphorylase, brain form (Pygb).